The following is a 321-amino-acid chain: Glutaminase (321 aa).

Positions 69, 120, 165, 172, 196, 248, and 266 each coordinate substrate.

It belongs to the glutaminase family. As to quaternary structure, homotetramer.

It catalyses the reaction L-glutamine + H2O = L-glutamate + NH4(+). This chain is Glutaminase, found in Parabacteroides distasonis (strain ATCC 8503 / DSM 20701 / CIP 104284 / JCM 5825 / NCTC 11152).